The sequence spans 515 residues: Glucose-6-phosphate 1-dehydrogenase (515 aa).

A2 bears the N-acetylalanine mark. The residue at position 8 (S8) is a Phosphoserine. T10 carries the post-translational modification Phosphothreonine. Residue G38–K45 participates in NADP(+) binding. An N6-acetyllysine modification is found at K89. Residues Y147 and K171 each coordinate NADP(+). D-glucose 6-phosphate contacts are provided by residues K171, H201 to K205, E239, and E258. Residue K171 is modified to N6-(2-hydroxyisobutyryl)lysine; alternate. N6-acetyllysine; alternate is present on K171. Residue R357 participates in NADP(+) binding. D-glucose 6-phosphate is bound by residues K360 and R365. NADP(+)-binding residues include K366, R370, and R393. Position 395 (Q395) interacts with D-glucose 6-phosphate. NADP(+) is bound by residues Y401–K403 and D421–T423. N6-acetyllysine is present on K403. K432 carries the post-translational modification N6-acetyllysine. R487 is a binding site for NADP(+). At K497 the chain carries N6-acetyllysine. The NADP(+) site is built by Y503 and W509. Y503 bears the Phosphotyrosine mark.

This sequence belongs to the glucose-6-phosphate dehydrogenase family. In terms of assembly, homotetramer; dimer of dimers. Interacts with SIRT2; the interaction is enhanced by H(2)O(2) treatment. Forms a ternary complex with ALDOB and TP53; this interaction is direct. ALDOB stabilizes the complex inhibiting G6PD activity and keeping oxidative pentose phosphate metabolism in check. Post-translationally, acetylated by ELP3 at Lys-403; acetylation inhibits its homodimerization and enzyme activity. Deacetylated by SIRT2 at Lys-403; deacetylation stimulates its enzyme activity.

It is found in the cytoplasm. The protein resides in the cytosol. The protein localises to the membrane. The enzyme catalyses D-glucose 6-phosphate + NADP(+) = 6-phospho-D-glucono-1,5-lactone + NADPH + H(+). It participates in carbohydrate degradation; pentose phosphate pathway; D-ribulose 5-phosphate from D-glucose 6-phosphate (oxidative stage): step 1/3. Functionally, cytosolic glucose-6-phosphate dehydrogenase that catalyzes the first and rate-limiting step of the oxidative branch within the pentose phosphate pathway/shunt, an alternative route to glycolysis for the dissimilation of carbohydrates and a major source of reducing power and metabolic intermediates for fatty acid and nucleic acid biosynthetic processes. This Bos indicus (Zebu) protein is Glucose-6-phosphate 1-dehydrogenase (G6PD).